Here is a 273-residue protein sequence, read N- to C-terminus: Light-independent protochlorophyllide reductase iron-sulfur ATP-binding protein (273 aa).

ATP is bound by residues 12-17 (GIGKST) and K41. Residue S16 coordinates Mg(2+). Residues C97 and C131 each contribute to the [4Fe-4S] cluster site. Residue 182-183 (NR) coordinates ATP.

Belongs to the NifH/BchL/ChlL family. Homodimer. Protochlorophyllide reductase is composed of three subunits; BchL, BchN and BchB. [4Fe-4S] cluster serves as cofactor.

The catalysed reaction is chlorophyllide a + oxidized 2[4Fe-4S]-[ferredoxin] + 2 ADP + 2 phosphate = protochlorophyllide a + reduced 2[4Fe-4S]-[ferredoxin] + 2 ATP + 2 H2O. It functions in the pathway porphyrin-containing compound metabolism; bacteriochlorophyll biosynthesis (light-independent). In terms of biological role, component of the dark-operative protochlorophyllide reductase (DPOR) that uses Mg-ATP and reduced ferredoxin to reduce ring D of protochlorophyllide (Pchlide) to form chlorophyllide a (Chlide). This reaction is light-independent. The L component serves as a unique electron donor to the NB-component of the complex, and binds Mg-ATP. This Roseiflexus castenholzii (strain DSM 13941 / HLO8) protein is Light-independent protochlorophyllide reductase iron-sulfur ATP-binding protein.